Here is a 315-residue protein sequence, read N- to C-terminus: Small ribosomal subunit biogenesis GTPase RsgA (315 aa).

One can recognise a CP-type G domain in the interval 82–246 (DQFKSKVLAA…LIDSPGFQEF (165 aa)). Residues 130–133 (NKID) and 184–192 (GQSGMGKSS) contribute to the GTP site. Zn(2+)-binding residues include Cys270, Cys275, His277, and Cys283.

The protein belongs to the TRAFAC class YlqF/YawG GTPase family. RsgA subfamily. Monomer. Associates with 30S ribosomal subunit, binds 16S rRNA. It depends on Zn(2+) as a cofactor.

Its subcellular location is the cytoplasm. Its function is as follows. One of several proteins that assist in the late maturation steps of the functional core of the 30S ribosomal subunit. Helps release RbfA from mature subunits. May play a role in the assembly of ribosomal proteins into the subunit. Circularly permuted GTPase that catalyzes slow GTP hydrolysis, GTPase activity is stimulated by the 30S ribosomal subunit. The polypeptide is Small ribosomal subunit biogenesis GTPase RsgA (Ralstonia pickettii (strain 12J)).